The chain runs to 226 residues: ATP-dependent dethiobiotin synthetase BioD (226 aa).

12–17 (GIGKTV) is a binding site for ATP. Threonine 16 is a binding site for Mg(2+). The active site involves lysine 37. Threonine 41 is a binding site for substrate. ATP contacts are provided by residues aspartate 49, 108–111 (EGAG), 169–170 (GS), and 197–199 (PAG). Residues aspartate 49 and glutamate 108 each coordinate Mg(2+).

The protein belongs to the dethiobiotin synthetase family. In terms of assembly, homodimer. Mg(2+) is required as a cofactor.

It localises to the cytoplasm. It catalyses the reaction (7R,8S)-7,8-diammoniononanoate + CO2 + ATP = (4R,5S)-dethiobiotin + ADP + phosphate + 3 H(+). Its pathway is cofactor biosynthesis; biotin biosynthesis; biotin from 7,8-diaminononanoate: step 1/2. Catalyzes a mechanistically unusual reaction, the ATP-dependent insertion of CO2 between the N7 and N8 nitrogen atoms of 7,8-diaminopelargonic acid (DAPA, also called 7,8-diammoniononanoate) to form a ureido ring. In Mycolicibacterium gilvum (strain PYR-GCK) (Mycobacterium gilvum (strain PYR-GCK)), this protein is ATP-dependent dethiobiotin synthetase BioD.